We begin with the raw amino-acid sequence, 63 residues long: Large ribosomal subunit protein bL32 (63 aa).

The span at 1–16 (MAVPKRKTSRMKRGFR) shows a compositional bias: basic residues. The segment at 1–22 (MAVPKRKTSRMKRGFRRSADAI) is disordered.

Belongs to the bacterial ribosomal protein bL32 family.

This chain is Large ribosomal subunit protein bL32, found in Beijerinckia indica subsp. indica (strain ATCC 9039 / DSM 1715 / NCIMB 8712).